The following is a 228-amino-acid chain: Orotidine 5'-phosphate decarboxylase (228 aa).

Substrate is bound by residues aspartate 11, lysine 33, 60–69 (DLKLHDIPNT), threonine 117, arginine 178, glutamine 186, glycine 206, and arginine 207. The active-site Proton donor is lysine 62.

This sequence belongs to the OMP decarboxylase family. Type 1 subfamily. As to quaternary structure, homodimer.

It catalyses the reaction orotidine 5'-phosphate + H(+) = UMP + CO2. It functions in the pathway pyrimidine metabolism; UMP biosynthesis via de novo pathway; UMP from orotate: step 2/2. In terms of biological role, catalyzes the decarboxylation of orotidine 5'-monophosphate (OMP) to uridine 5'-monophosphate (UMP). The polypeptide is Orotidine 5'-phosphate decarboxylase (Ehrlichia canis (strain Jake)).